Consider the following 227-residue polypeptide: Small ribosomal subunit protein uS3 (227 aa).

The region spanning 39–107 is the KH type-2 domain; it reads VRQLLQKRLK…PVHITIEEVR (69 aa).

This sequence belongs to the universal ribosomal protein uS3 family. As to quaternary structure, part of the 30S ribosomal subunit. Forms a tight complex with proteins S10 and S14.

Its function is as follows. Binds the lower part of the 30S subunit head. Binds mRNA in the 70S ribosome, positioning it for translation. The protein is Small ribosomal subunit protein uS3 (rpsC) of Coxiella burnetii (strain RSA 493 / Nine Mile phase I).